The following is a 182-amino-acid chain: Ribosome maturation factor RimM (182 aa).

The PRC barrel domain occupies 103–182 (EDDYYWKDLM…RVEVDWDPGF (80 aa)).

Belongs to the RimM family. In terms of assembly, binds ribosomal protein uS19.

Its subcellular location is the cytoplasm. In terms of biological role, an accessory protein needed during the final step in the assembly of 30S ribosomal subunit, possibly for assembly of the head region. Essential for efficient processing of 16S rRNA. May be needed both before and after RbfA during the maturation of 16S rRNA. It has affinity for free ribosomal 30S subunits but not for 70S ribosomes. This is Ribosome maturation factor RimM from Yersinia pestis bv. Antiqua (strain Antiqua).